The sequence spans 118 residues: Large ribosomal subunit protein bL20 (118 aa).

This sequence belongs to the bacterial ribosomal protein bL20 family.

Its function is as follows. Binds directly to 23S ribosomal RNA and is necessary for the in vitro assembly process of the 50S ribosomal subunit. It is not involved in the protein synthesizing functions of that subunit. The protein is Large ribosomal subunit protein bL20 of Trichodesmium erythraeum (strain IMS101).